A 209-amino-acid polypeptide reads, in one-letter code: Thymidine kinase (209 aa).

ATP-binding positions include 25–32 and 103–106; these read GCMFAGKT and DEVQ. The Proton acceptor role is filled by glutamate 104. Zn(2+) is bound by residues cysteine 160, cysteine 163, cysteine 198, and cysteine 201.

It belongs to the thymidine kinase family. Homotetramer.

It localises to the cytoplasm. The catalysed reaction is thymidine + ATP = dTMP + ADP + H(+). The chain is Thymidine kinase from Mycoplasma capricolum subsp. capricolum (strain California kid / ATCC 27343 / NCTC 10154).